Consider the following 224-residue polypeptide: Holliday junction branch migration complex subunit RuvA (224 aa).

Positions 1-67 (MISWLKGEKV…EDGTSLYGFI (67 aa)) are domain I. The tract at residues 68-146 (EVNQRDLFRE…RFTDNDKTIH (79 aa)) is domain II. Positions 147-155 (ENKKGIEAN) are flexible linker. Positions 156 to 224 (QFSKYIDEIY…ILMKLSEKTT (69 aa)) are domain III.

It belongs to the RuvA family. As to quaternary structure, homotetramer. Forms an RuvA(8)-RuvB(12)-Holliday junction (HJ) complex. HJ DNA is sandwiched between 2 RuvA tetramers; dsDNA enters through RuvA and exits via RuvB. An RuvB hexamer assembles on each DNA strand where it exits the tetramer. Each RuvB hexamer is contacted by two RuvA subunits (via domain III) on 2 adjacent RuvB subunits; this complex drives branch migration. In the full resolvosome a probable DNA-RuvA(4)-RuvB(12)-RuvC(2) complex forms which resolves the HJ.

It localises to the cytoplasm. The RuvA-RuvB-RuvC complex processes Holliday junction (HJ) DNA during genetic recombination and DNA repair, while the RuvA-RuvB complex plays an important role in the rescue of blocked DNA replication forks via replication fork reversal (RFR). RuvA specifically binds to HJ cruciform DNA, conferring on it an open structure. The RuvB hexamer acts as an ATP-dependent pump, pulling dsDNA into and through the RuvAB complex. HJ branch migration allows RuvC to scan DNA until it finds its consensus sequence, where it cleaves and resolves the cruciform DNA. This Prochlorococcus marinus (strain NATL1A) protein is Holliday junction branch migration complex subunit RuvA.